The following is a 514-amino-acid chain: Probable outer membrane protein pmp12 (514 aa).

Residues 1 to 21 form the signal peptide; that stretch reads MTILRNFLTCSALFLALPAAA.

It belongs to the PMP outer membrane protein family.

Its subcellular location is the secreted. The protein localises to the cell wall. It is found in the cell outer membrane. The polypeptide is Probable outer membrane protein pmp12 (pmp12) (Chlamydia pneumoniae (Chlamydophila pneumoniae)).